Reading from the N-terminus, the 388-residue chain is Succinyl-diaminopimelate desuccinylase (388 aa).

Zn(2+) is bound at residue His84. Asp86 is a catalytic residue. Zn(2+) is bound at residue Asp115. The Proton acceptor role is filled by Glu146. The Zn(2+) site is built by Glu147, Glu175, and His360.

Belongs to the peptidase M20A family. DapE subfamily. As to quaternary structure, homodimer. Zn(2+) serves as cofactor. Requires Co(2+) as cofactor.

The catalysed reaction is N-succinyl-(2S,6S)-2,6-diaminopimelate + H2O = (2S,6S)-2,6-diaminopimelate + succinate. It participates in amino-acid biosynthesis; L-lysine biosynthesis via DAP pathway; LL-2,6-diaminopimelate from (S)-tetrahydrodipicolinate (succinylase route): step 3/3. Catalyzes the hydrolysis of N-succinyl-L,L-diaminopimelic acid (SDAP), forming succinate and LL-2,6-diaminopimelate (DAP), an intermediate involved in the bacterial biosynthesis of lysine and meso-diaminopimelic acid, an essential component of bacterial cell walls. The sequence is that of Succinyl-diaminopimelate desuccinylase from Helicobacter pylori (strain J99 / ATCC 700824) (Campylobacter pylori J99).